The primary structure comprises 658 residues: Probable rhamnogalacturonate lyase B (658 aa).

Positions 1 to 19 (MRFAIPLGAACAWAGVALA) are cleaved as a signal peptide. 10 N-linked (GlcNAc...) asparagine glycosylation sites follow: asparagine 110, asparagine 143, asparagine 239, asparagine 280, asparagine 522, asparagine 530, asparagine 564, asparagine 571, asparagine 592, and asparagine 633.

The protein belongs to the polysaccharide lyase 4 family.

It is found in the secreted. The catalysed reaction is Endotype eliminative cleavage of L-alpha-rhamnopyranosyl-(1-&gt;4)-alpha-D-galactopyranosyluronic acid bonds of rhamnogalacturonan I domains in ramified hairy regions of pectin leaving L-rhamnopyranose at the reducing end and 4-deoxy-4,5-unsaturated D-galactopyranosyluronic acid at the non-reducing end.. In terms of biological role, pectinolytic enzymes consist of four classes of enzymes: pectin lyase, polygalacturonase, pectin methylesterase and rhamnogalacturonase. Degrades the rhamnogalacturonan I (RG-I) backbone of pectin. The polypeptide is Probable rhamnogalacturonate lyase B (rglB) (Neosartorya fischeri (strain ATCC 1020 / DSM 3700 / CBS 544.65 / FGSC A1164 / JCM 1740 / NRRL 181 / WB 181) (Aspergillus fischerianus)).